The following is a 20-amino-acid chain: Elongation factor Tu (20 aa).

It belongs to the GTP-binding elongation factor family. EF-Tu/EF-1A subfamily. As to quaternary structure, monomer.

It localises to the cytoplasm. In terms of biological role, this protein promotes the GTP-dependent binding of aminoacyl-tRNA to the A-site of ribosomes during protein biosynthesis. This Mycoplasmopsis synoviae (Mycoplasma synoviae) protein is Elongation factor Tu (tuf).